Here is a 309-residue protein sequence, read N- to C-terminus: Homoserine O-succinyltransferase (309 aa).

Cys142 functions as the Acyl-thioester intermediate in the catalytic mechanism. Lys163 and Ser192 together coordinate substrate. His235 functions as the Proton acceptor in the catalytic mechanism. Glu237 is a catalytic residue. Arg249 serves as a coordination point for substrate.

It belongs to the MetA family.

It is found in the cytoplasm. It catalyses the reaction L-homoserine + succinyl-CoA = O-succinyl-L-homoserine + CoA. Its pathway is amino-acid biosynthesis; L-methionine biosynthesis via de novo pathway; O-succinyl-L-homoserine from L-homoserine: step 1/1. Transfers a succinyl group from succinyl-CoA to L-homoserine, forming succinyl-L-homoserine. This chain is Homoserine O-succinyltransferase, found in Klebsiella pneumoniae subsp. pneumoniae (strain ATCC 700721 / MGH 78578).